The sequence spans 372 residues: Innexin-16 (372 aa).

Transmembrane regions (helical) follow at residues 31 to 51 (VVTTSILIAFSLLLFAKNYVG), 106 to 126 (VPFLLVIQALFFCVPRAFWII), 181 to 201 (LVMKLLILLNIVLQFFLLNSF), and 263 to 283 (IFIFLWFWFAFLLVATAGDFV). The N-linked (GlcNAc...) asparagine glycan is linked to asparagine 352.

Belongs to the pannexin family.

The protein localises to the cell membrane. It is found in the cell junction. The protein resides in the gap junction. Its function is as follows. Structural component of the gap junctions. Required for signals downstream of defecation clock. This chain is Innexin-16 (inx-16), found in Caenorhabditis elegans.